The sequence spans 346 residues: Uroporphyrinogen decarboxylase (346 aa).

Residues 26–30, aspartate 76, tyrosine 153, serine 208, and histidine 323 each bind substrate; that span reads RQAGR.

Belongs to the uroporphyrinogen decarboxylase family. Homodimer.

It localises to the cytoplasm. It carries out the reaction uroporphyrinogen III + 4 H(+) = coproporphyrinogen III + 4 CO2. Its pathway is porphyrin-containing compound metabolism; protoporphyrin-IX biosynthesis; coproporphyrinogen-III from 5-aminolevulinate: step 4/4. Catalyzes the decarboxylation of four acetate groups of uroporphyrinogen-III to yield coproporphyrinogen-III. In Prochlorococcus marinus (strain AS9601), this protein is Uroporphyrinogen decarboxylase.